A 143-amino-acid polypeptide reads, in one-letter code: Spore coat protein P (143 aa).

The 110-residue stretch at 34–143 folds into the sHSP domain; it reads FFDSEASTFV…VETVAFNKGL (110 aa).

This sequence belongs to the small heat shock protein (HSP20) family.

This is Spore coat protein P (cotP) from Bacillus subtilis (strain 168).